Reading from the N-terminus, the 321-residue chain is Nucleotide-binding protein GOX0815 (321 aa).

Position 27–34 (27–34 (GLSGAGKS)) interacts with ATP. Residue 72–75 (DVRS) participates in GTP binding.

It belongs to the RapZ-like family.

Displays ATPase and GTPase activities. The sequence is that of Nucleotide-binding protein GOX0815 from Gluconobacter oxydans (strain 621H) (Gluconobacter suboxydans).